The chain runs to 484 residues: Probable glycine dehydrogenase (decarboxylating) subunit 2 (484 aa).

An N6-(pyridoxal phosphate)lysine modification is found at Lys-264.

This sequence belongs to the GcvP family. C-terminal subunit subfamily. The glycine cleavage system is composed of four proteins: P, T, L and H. In this organism, the P 'protein' is a heterodimer of two subunits. It depends on pyridoxal 5'-phosphate as a cofactor.

The enzyme catalyses N(6)-[(R)-lipoyl]-L-lysyl-[glycine-cleavage complex H protein] + glycine + H(+) = N(6)-[(R)-S(8)-aminomethyldihydrolipoyl]-L-lysyl-[glycine-cleavage complex H protein] + CO2. Its function is as follows. The glycine cleavage system catalyzes the degradation of glycine. The P protein binds the alpha-amino group of glycine through its pyridoxal phosphate cofactor; CO(2) is released and the remaining methylamine moiety is then transferred to the lipoamide cofactor of the H protein. This Legionella pneumophila (strain Paris) protein is Probable glycine dehydrogenase (decarboxylating) subunit 2.